The primary structure comprises 27 residues: U1-poneritoxin-Na3b (27 aa).

The protein belongs to the ponericin-G family. As to expression, expressed by the venom gland.

The protein localises to the secreted. Shows a broad spectrum of activity against both Gram-positive and Gram-negative bacteria. Also has antimicrobial activity against S.cerevisiae. Has insecticidal and non-hemolytic activity. The chain is U1-poneritoxin-Na3b from Neoponera apicalis (Ant).